Here is a 525-residue protein sequence, read N- to C-terminus: GMP synthase [glutamine-hydrolyzing] (525 aa).

In terms of domain architecture, Glutamine amidotransferase type-1 spans 9-207 (RILILDFGSQ…VRDICQCEAL (199 aa)). The active-site Nucleophile is Cys86. Residues His181 and Glu183 contribute to the active site. The GMPS ATP-PPase domain occupies 208–400 (WTPAKIIDDA…LGLPYDMLYR (193 aa)). 235 to 241 (SGGVDSS) lines the ATP pocket.

As to quaternary structure, homodimer.

It carries out the reaction XMP + L-glutamine + ATP + H2O = GMP + L-glutamate + AMP + diphosphate + 2 H(+). It functions in the pathway purine metabolism; GMP biosynthesis; GMP from XMP (L-Gln route): step 1/1. Its function is as follows. Catalyzes the synthesis of GMP from XMP. This Citrobacter koseri (strain ATCC BAA-895 / CDC 4225-83 / SGSC4696) protein is GMP synthase [glutamine-hydrolyzing].